Reading from the N-terminus, the 401-residue chain is Phosphoglycerate kinase (401 aa).

Substrate-binding positions include 24–26 (DFN), arginine 40, 63–66 (HFGR), arginine 122, and arginine 155. ATP-binding positions include lysine 206, glycine 297, glutamate 328, and 357-360 (GGDS).

Belongs to the phosphoglycerate kinase family. In terms of assembly, monomer.

It localises to the cytoplasm. The catalysed reaction is (2R)-3-phosphoglycerate + ATP = (2R)-3-phospho-glyceroyl phosphate + ADP. Its pathway is carbohydrate degradation; glycolysis; pyruvate from D-glyceraldehyde 3-phosphate: step 2/5. This chain is Phosphoglycerate kinase, found in Gloeothece citriformis (strain PCC 7424) (Cyanothece sp. (strain PCC 7424)).